A 389-amino-acid polypeptide reads, in one-letter code: Chalcone synthase 4 (389 aa).

Cys164 is a catalytic residue.

It belongs to the thiolase-like superfamily. Chalcone/stilbene synthases family.

It catalyses the reaction (E)-4-coumaroyl-CoA + 3 malonyl-CoA + 3 H(+) = 2',4,4',6'-tetrahydroxychalcone + 3 CO2 + 4 CoA. The protein operates within secondary metabolite biosynthesis; flavonoid biosynthesis. In terms of biological role, the primary product of this enzyme is 4,2',4',6'-tetrahydroxychalcone (also termed naringenin-chalcone or chalcone) which can under specific conditions spontaneously isomerize into naringenin. The protein is Chalcone synthase 4 (CHS4) of Pisum sativum (Garden pea).